The primary structure comprises 258 residues: Ubiquinone/menaquinone biosynthesis C-methyltransferase UbiE (258 aa).

S-adenosyl-L-methionine is bound by residues Thr81, Asp102, and 130-131; that span reads NA.

Belongs to the class I-like SAM-binding methyltransferase superfamily. MenG/UbiE family.

It carries out the reaction a 2-demethylmenaquinol + S-adenosyl-L-methionine = a menaquinol + S-adenosyl-L-homocysteine + H(+). The enzyme catalyses a 2-methoxy-6-(all-trans-polyprenyl)benzene-1,4-diol + S-adenosyl-L-methionine = a 5-methoxy-2-methyl-3-(all-trans-polyprenyl)benzene-1,4-diol + S-adenosyl-L-homocysteine + H(+). The protein operates within quinol/quinone metabolism; menaquinone biosynthesis; menaquinol from 1,4-dihydroxy-2-naphthoate: step 2/2. It participates in cofactor biosynthesis; ubiquinone biosynthesis. Functionally, methyltransferase required for the conversion of demethylmenaquinol (DMKH2) to menaquinol (MKH2) and the conversion of 2-polyprenyl-6-methoxy-1,4-benzoquinol (DDMQH2) to 2-polyprenyl-3-methyl-6-methoxy-1,4-benzoquinol (DMQH2). The chain is Ubiquinone/menaquinone biosynthesis C-methyltransferase UbiE from Sinorhizobium fredii (strain NBRC 101917 / NGR234).